A 193-amino-acid chain; its full sequence is Adenine phosphoribosyltransferase (193 aa).

The protein belongs to the purine/pyrimidine phosphoribosyltransferase family. In terms of assembly, homodimer.

The protein localises to the cytoplasm. It carries out the reaction AMP + diphosphate = 5-phospho-alpha-D-ribose 1-diphosphate + adenine. It functions in the pathway purine metabolism; AMP biosynthesis via salvage pathway; AMP from adenine: step 1/1. Catalyzes a salvage reaction resulting in the formation of AMP, that is energically less costly than de novo synthesis. The chain is Adenine phosphoribosyltransferase from Bifidobacterium longum (strain DJO10A).